Here is a 502-residue protein sequence, read N- to C-terminus: RNA-splicing ligase RtcB homolog 2 (502 aa).

Mn(2+)-binding residues include Asp120, Cys123, His228, His260, and His354. Position 227–231 (227–231) interacts with GMP; sequence NHYAE. GMP contacts are provided by residues 354–355, 403–406, Ser410, and 429–432; these read HN, GGSM, and HGAG. His429 acts as the GMP-histidine intermediate in catalysis.

Belongs to the RtcB family. As to quaternary structure, catalytic component of the tRNA-splicing ligase complex. The cofactor is Mn(2+).

The enzyme catalyses a 3'-end 3'-phospho-ribonucleotide-RNA + a 5'-end dephospho-ribonucleoside-RNA + GTP = a ribonucleotidyl-ribonucleotide-RNA + GMP + diphosphate. It carries out the reaction a 3'-end 2',3'-cyclophospho-ribonucleotide-RNA + a 5'-end dephospho-ribonucleoside-RNA + GTP + H2O = a ribonucleotidyl-ribonucleotide-RNA + GMP + diphosphate + H(+). In terms of biological role, catalytic subunit of the tRNA-splicing ligase complex that acts by directly joining spliced tRNA halves to mature-sized tRNAs by incorporating the precursor-derived splice junction phosphate into the mature tRNA as a canonical 3',5'-phosphodiester. May act as an RNA ligase with broad substrate specificity, and may function toward other RNAs. The polypeptide is RNA-splicing ligase RtcB homolog 2 (Culex quinquefasciatus (Southern house mosquito)).